The following is a 442-amino-acid chain: MLNVTDLRGQTPSKSDIRRALPRGGTDVWSVLPIVQPVVEDVQNRGAEAALDYGEKFDHIRPASVRVPAEVIAAAENTLDPLVRESIEESIRRVRKVHAEQKPSEHTTELSPGGTVTERFMPIDRVGLYVPGGNAVYPSSVIMNTVPAQEAGVNSLVVASPPQAEHGGWPHPTILAACSILGVDEVWAVGGGQAVALLAYGDDAAGLEPVDMITGPGNIFVTAAKRLVRGVVGTDSEAGPTEIAVLADASANAVNVAYDLISQAEHDVMAASVLITDSEQLAKDVNREIEARYSITRNAERVAEALRGAQSGIVLVDDISVGIQVADQYAAEHLEIHTENARAVAEQITNAGAIFVGDFSPVPLGDYSAGSNHVLPTSGSARFSAGLSTHTFLRPVNLIEYDEAALKDVSQVVINFANAEDLPAHGEAIRARFENLPTTDEA.

A disordered region spans residues 1 to 20; it reads MLNVTDLRGQTPSKSDIRRA. The NAD(+) site is built by Tyr-129, Gln-193, and Asn-218. 3 residues coordinate substrate: Thr-241, Gln-263, and His-266. Zn(2+) contacts are provided by Gln-263 and His-266. Active-site proton acceptor residues include Glu-332 and His-333. Residues His-333, Asp-366, Glu-420, and His-425 each contribute to the substrate site. Position 366 (Asp-366) interacts with Zn(2+). His-425 lines the Zn(2+) pocket.

The protein belongs to the histidinol dehydrogenase family. Zn(2+) serves as cofactor.

The catalysed reaction is L-histidinol + 2 NAD(+) + H2O = L-histidine + 2 NADH + 3 H(+). The protein operates within amino-acid biosynthesis; L-histidine biosynthesis; L-histidine from 5-phospho-alpha-D-ribose 1-diphosphate: step 9/9. Functionally, catalyzes the sequential NAD-dependent oxidations of L-histidinol to L-histidinaldehyde and then to L-histidine. This Corynebacterium glutamicum (strain ATCC 13032 / DSM 20300 / JCM 1318 / BCRC 11384 / CCUG 27702 / LMG 3730 / NBRC 12168 / NCIMB 10025 / NRRL B-2784 / 534) protein is Histidinol dehydrogenase.